The following is a 159-amino-acid chain: SsrA-binding protein (159 aa).

The span at 137–147 (LAERQANRETE) shows a compositional bias: basic and acidic residues. The disordered stretch occupies residues 137-159 (LAERQANRETEQAVGRRLKGMHD).

It belongs to the SmpB family.

Its subcellular location is the cytoplasm. Its function is as follows. Required for rescue of stalled ribosomes mediated by trans-translation. Binds to transfer-messenger RNA (tmRNA), required for stable association of tmRNA with ribosomes. tmRNA and SmpB together mimic tRNA shape, replacing the anticodon stem-loop with SmpB. tmRNA is encoded by the ssrA gene; the 2 termini fold to resemble tRNA(Ala) and it encodes a 'tag peptide', a short internal open reading frame. During trans-translation Ala-aminoacylated tmRNA acts like a tRNA, entering the A-site of stalled ribosomes, displacing the stalled mRNA. The ribosome then switches to translate the ORF on the tmRNA; the nascent peptide is terminated with the 'tag peptide' encoded by the tmRNA and targeted for degradation. The ribosome is freed to recommence translation, which seems to be the essential function of trans-translation. This Nocardioides sp. (strain ATCC BAA-499 / JS614) protein is SsrA-binding protein.